Reading from the N-terminus, the 258-residue chain is NAD(P)H-hydrate epimerase (258 aa).

Positions 15-244 (AFQLDQELMS…RIAKEYGIED (230 aa)) constitute a YjeF N-terminal domain. 75–79 (NNGGD) contacts (6S)-NADPHX. Asparagine 76 and aspartate 145 together coordinate K(+). (6S)-NADPHX-binding positions include 149-155 (GFSFKPP) and aspartate 181. K(+) is bound at residue serine 184.

This sequence belongs to the NnrE/AIBP family. The cofactor is K(+).

Its subcellular location is the cytoplasm. It localises to the mitochondrion. It catalyses the reaction (6R)-NADHX = (6S)-NADHX. The catalysed reaction is (6R)-NADPHX = (6S)-NADPHX. In terms of biological role, catalyzes the epimerization of the S- and R-forms of NAD(P)HX, a damaged form of NAD(P)H that is a result of enzymatic or heat-dependent hydration. This is a prerequisite for the S-specific NAD(P)H-hydrate dehydratase to allow the repair of both epimers of NAD(P)HX. The protein is NAD(P)H-hydrate epimerase of Candida albicans (strain WO-1) (Yeast).